The sequence spans 643 residues: Rhophilin-1 (643 aa).

The disordered stretch occupies residues 1 to 43 (MILEERPDGQGTGEESSRPQDDGSIRKGYGSFVQNQPGQLQSH). Basic and acidic residues predominate over residues 15 to 25 (ESSRPQDDGSI). In terms of domain architecture, REM-1 spans 30-104 (GSFVQNQPGQ…LAELSTSVDV (75 aa)). Phosphoserine is present on Ser31. Residues 32–42 (FVQNQPGQLQS) are compositionally biased toward polar residues. The region spanning 115 to 462 (PMIPLGLKET…LAKYSQLERE (348 aa)) is the BRO1 domain. The PDZ domain maps to 500–577 (PVHMTRGEGS…EGVSLQVVSL (78 aa)).

The protein belongs to the RHPN family. As to quaternary structure, binds specifically to GTP-Rho. Interacts with ROPN1. In terms of tissue distribution, highly expressed in testis.

In terms of biological role, has no enzymatic activity. May serve as a target for Rho, and interact with some cytoskeletal component upon Rho binding or relay a Rho signal to other molecules. This chain is Rhophilin-1 (Rhpn1), found in Mus musculus (Mouse).